The chain runs to 2063 residues: Rho guanine nucleotide exchange factor 17 (2063 aa).

Disordered regions lie at residues 22 to 365 (WSGG…MSDS), 380 to 466 (YLAS…SNPD), 485 to 581 (LRVR…AEED), and 602 to 958 (IQRM…RHVR). Residues 65–76 (PLAAPAQPRPLR) are compositionally biased toward low complexity. Residues 87–96 (RRFDAPRLDD) show a composition bias toward basic and acidic residues. A compositionally biased stretch (low complexity) spans 108–122 (PAAAEEAAEGPARGA). 2 positions are modified to phosphoserine: serine 142 and serine 152. Residues 225–250 (AGARASCSSSSIAASYPVSRSRAASS) show a composition bias toward low complexity. Residue serine 310 is modified to Phosphoserine. Residues 313-323 (LNLSSMNSAGV) are compositionally biased toward polar residues. Phosphoserine occurs at positions 326, 332, 383, 387, 395, 410, and 420. Residues 388–397 (RGSSRYSSTE) are compositionally biased toward polar residues. The segment covering 445-456 (ALRDGGFEPEKS) has biased composition (basic and acidic residues). Serine 461 and serine 546 each carry phosphoserine. Residues 562 to 573 (SALKSSSSELLL) are compositionally biased toward low complexity. Position 619 is a phosphoserine (serine 619). Over residues 671–680 (LSSSSAQTNH) the composition is skewed to polar residues. The residue at position 696 (serine 696) is a Phosphoserine. Phosphothreonine occurs at positions 699 and 702. Phosphoserine is present on serine 735. Residues 754–765 (SVDSNLLGSLSP) are compositionally biased toward polar residues. Residues 827–836 (SLSDPSRRGE) show a composition bias toward basic and acidic residues. At serine 914 the chain carries Phosphoserine. Residues 917 to 928 (LIRRGSKKRPAR) show a composition bias toward basic residues. Residues 930 to 939 (SHQELRRDEG) show a composition bias toward basic and acidic residues. Phosphoserine occurs at positions 961 and 1002. The disordered stretch occupies residues 1034 to 1060 (APPSAEAKPPEAARPADEPTPASKCCS). Residues 1041 to 1050 (KPPEAARPAD) are compositionally biased toward basic and acidic residues. A DH domain is found at 1066–1254 (MRKHVAMTLL…KQVAERINKG (189 aa)). The residue at position 1331 (serine 1331) is a Phosphoserine. 4 disordered regions span residues 1564 to 1584 (HREP…PAGP), 1616 to 1719 (GLEM…SSHG), 1991 to 2020 (TPPP…PAPA), and 2036 to 2055 (FRLS…DDST). The span at 1568-1582 (PPSLRSPPETAPEPA) shows a compositional bias: pro residues. Over residues 1644 to 1680 (SPSPSGTLQSQASRSTISSSFGNEETPSSKEATAETT) the composition is skewed to low complexity. The segment covering 2004–2013 (PSLEHRDSPW) has biased composition (basic and acidic residues).

In terms of tissue distribution, highly expressed in the heart.

In terms of biological role, acts as a guanine nucleotide exchange factor (GEF) for RhoA GTPases. The protein is Rho guanine nucleotide exchange factor 17 (ARHGEF17) of Homo sapiens (Human).